Reading from the N-terminus, the 20-residue chain is L-amino-acid oxidase L2 (20 aa).

Belongs to the flavin monoamine oxidase family. FIG1 subfamily. As to quaternary structure, monomer. This is in contrast with most of its orthologs, that are non-covalently linked homodimers. The cofactor is FAD. N-glycosylated. As to expression, expressed by the venom gland.

Its subcellular location is the secreted. It catalyses the reaction an L-alpha-amino acid + O2 + H2O = a 2-oxocarboxylate + H2O2 + NH4(+). The catalysed reaction is L-leucine + O2 + H2O = 4-methyl-2-oxopentanoate + H2O2 + NH4(+). It carries out the reaction L-phenylalanine + O2 + H2O = 3-phenylpyruvate + H2O2 + NH4(+). The enzyme catalyses L-tryptophan + O2 + H2O = indole-3-pyruvate + H2O2 + NH4(+). It catalyses the reaction L-methionine + O2 + H2O = 4-methylsulfanyl-2-oxobutanoate + H2O2 + NH4(+). The catalysed reaction is L-isoleucine + O2 + H2O = (S)-3-methyl-2-oxopentanoate + H2O2 + NH4(+). It carries out the reaction L-tyrosine + O2 + H2O = 3-(4-hydroxyphenyl)pyruvate + H2O2 + NH4(+). Catalyzes an oxidative deamination of predominantly hydrophobic and aromatic L-amino acids, thus producing hydrogen peroxide that may contribute to the diverse toxic effects of this enzyme. Is active on L-Ile, L-Leu, L-Met, L-Phe, L-Trp, and L-Tyr. Exhibits diverse biological activities, such as hemorrhage, hemolysis, edema, apoptosis of vascular endothelial cells or tumor cell lines, antibacterial and antiparasitic activities, as well as regulation of platelet aggregation. Its effect on platelets is controversial, since it either induces aggregation or inhibits agonist-induced aggregation. These different effects are probably due to different experimental conditions. This Daboia russelii (Russel's viper) protein is L-amino-acid oxidase L2.